The primary structure comprises 483 residues: Probable glycine dehydrogenase (decarboxylating) subunit 2 (483 aa).

The disordered stretch occupies residues 1–24 (MLIFDHSRPGRTAAAQLPATGGDL). Lysine 264 is modified (N6-(pyridoxal phosphate)lysine).

It belongs to the GcvP family. C-terminal subunit subfamily. In terms of assembly, the glycine cleavage system is composed of four proteins: P, T, L and H. In this organism, the P 'protein' is a heterodimer of two subunits. Pyridoxal 5'-phosphate is required as a cofactor.

The catalysed reaction is N(6)-[(R)-lipoyl]-L-lysyl-[glycine-cleavage complex H protein] + glycine + H(+) = N(6)-[(R)-S(8)-aminomethyldihydrolipoyl]-L-lysyl-[glycine-cleavage complex H protein] + CO2. The glycine cleavage system catalyzes the degradation of glycine. The P protein binds the alpha-amino group of glycine through its pyridoxal phosphate cofactor; CO(2) is released and the remaining methylamine moiety is then transferred to the lipoamide cofactor of the H protein. In Thiobacillus denitrificans (strain ATCC 25259 / T1), this protein is Probable glycine dehydrogenase (decarboxylating) subunit 2.